A 356-amino-acid polypeptide reads, in one-letter code: Surface presentation of antigens protein SpaS (356 aa).

The next 5 membrane-spanning stretches (helical) occupy residues 29–49 (LIIACLTLGGIAYLVSYGSFN), 72–92 (LAVFGIGLKYLIPFMLLCLVC), 132–152 (VKDTVKTLLYLSSFVVAAIIC), 179–199 (LLALVLTCLACALIVLLLDAI), and 261–281 (HITIGIYFKPELMPIPMISVY).

Belongs to the type III secretion exporter family.

The protein resides in the cell inner membrane. In terms of biological role, involved in a secretory pathway responsible for the surface presentation of determinants needed for the entry of Salmonella species into mammalian cells. The sequence is that of Surface presentation of antigens protein SpaS (spaS) from Salmonella typhimurium (strain LT2 / SGSC1412 / ATCC 700720).